A 416-amino-acid chain; its full sequence is Fusaric acid cluster transcription factor FUB10 (416 aa).

Residues 16-47 (CDRCRAQKLRCHRDSGHSTDACLRCLKSGIEC) constitute a DNA-binding region (zn(2)-C6 fungal-type). The tract at residues 50–92 (SKARPTGRPPSRQVQPTVSVEQGDTSSSSHTTDSSPSAGGTDI) is disordered. Over residues 61–73 (RQVQPTVSVEQGD) the composition is skewed to polar residues. Residues 74–86 (TSSSSHTTDSSPS) show a composition bias toward low complexity.

Its subcellular location is the nucleus. Transcription factor that regulates the expression of the gene cluster that mediates the biosynthesis of fusaric acid, a mycotoxin with low to moderate toxicity to animals and humans, but with high phytotoxic properties. The sequence is that of Fusaric acid cluster transcription factor FUB10 from Fusarium oxysporum f. sp. lycopersici (strain 4287 / CBS 123668 / FGSC 9935 / NRRL 34936) (Fusarium vascular wilt of tomato).